Reading from the N-terminus, the 637-residue chain is Threonine--tRNA ligase (637 aa).

A TGS domain is found at 1–61; that stretch reads MPNVKLPDGN…KEDCSLIIVT (61 aa). Residues 242–533 are catalytic; the sequence is DHRKLGKALD…LIEHYAGKLP (292 aa). Residues Cys-333, His-384, and His-510 each contribute to the Zn(2+) site.

Belongs to the class-II aminoacyl-tRNA synthetase family. As to quaternary structure, homodimer. The cofactor is Zn(2+).

It is found in the cytoplasm. It catalyses the reaction tRNA(Thr) + L-threonine + ATP = L-threonyl-tRNA(Thr) + AMP + diphosphate + H(+). In terms of biological role, catalyzes the attachment of threonine to tRNA(Thr) in a two-step reaction: L-threonine is first activated by ATP to form Thr-AMP and then transferred to the acceptor end of tRNA(Thr). Also edits incorrectly charged L-seryl-tRNA(Thr). The polypeptide is Threonine--tRNA ligase (Legionella pneumophila subsp. pneumophila (strain Philadelphia 1 / ATCC 33152 / DSM 7513)).